Consider the following 293-residue polypeptide: Pantothenate synthetase (293 aa).

Residue 30–37 (MGYLHKGH) coordinates ATP. The active-site Proton donor is histidine 37. A (R)-pantoate-binding site is contributed by glutamine 61. A beta-alanine-binding site is contributed by glutamine 61. 147 to 150 (GEKD) is a binding site for ATP. (R)-pantoate is bound at residue glutamine 153. ATP is bound by residues valine 176 and 184–187 (CSSR).

This sequence belongs to the pantothenate synthetase family. Homodimer.

It is found in the cytoplasm. It carries out the reaction (R)-pantoate + beta-alanine + ATP = (R)-pantothenate + AMP + diphosphate + H(+). It participates in cofactor biosynthesis; (R)-pantothenate biosynthesis; (R)-pantothenate from (R)-pantoate and beta-alanine: step 1/1. Catalyzes the condensation of pantoate with beta-alanine in an ATP-dependent reaction via a pantoyl-adenylate intermediate. In Brucella melitensis biotype 2 (strain ATCC 23457), this protein is Pantothenate synthetase.